An 835-amino-acid polypeptide reads, in one-letter code: MNQIEQKWQQIWYDEKAFEVSNESSKPKYYVLEMLPYPSGKIHVGHVRNYSIGDVIARFMTMQGFNVLHPMGWDAFGLPAENAAIKNNSHPKDWTYSNIENMKKQLKSMGFSYDWSREINSCDPQYYKHEQKFFLELYERNLAYQKESLVNWDPVDNTVLANEQVVDGRGWRSGAIVEKRYLKQWFLKITDYAEELLNEIQNLKEWPEAVRSMQEKWIGKSIGANFHFKIKDNEDNTIEVFSTKPETIFGAGFIGIAFNHPIIEKLISKTPEILSFITKCSHITGSSELEKTEKEGVFTGLYVIHPFDSNIVLPVIITNFVLMDYGTGAVFGCPAHDERDHELAVKMNLPIKQVIETDIDVQKTAYTEDGILVNSDFLNGLTSNEAKQKVIDEFEKLGIGKRSVYYRLKDWGISRQRFWGCPIPMIHCEACGIVPVPCSDLPVTLPDDVSFDGHGNPLDHHPSWKHVNCPKCDKSAIRETDTFDTFFESSWYFTRYCNSNATEMTDKKACDYWLPVDKYIGGIEHAVMHLLYARFFTKVMNEQNYVSVREPFKGLFTQGMVLHATYKDEHNNWLYPEEVVKKGNEFFHKESNNRVVQGRIEKMSKSKKNLIDLVTMQEQYGADAIRLFVLSDSPPEKDLEWSASGIEGCSRFINKLEHMFEAIASLIDDVNSEINKELNRLVHFTIKHVADDIKHFVLNRAIARMRELSNAISAELNKEVVDVKTVRYGFNVIVQLLNPFIPHITEEIWQKLGNKERLYNSAFPAFDESMLELDTYVMAVQVNGKLRDTYEFKTSASEDEIKQITVNLPKVQKFLEGKEPKKIILVPRKIVNIIV.

The short motif at proline 36 to histidine 46 is the 'HIGH' region element. The short motif at lysine 602–serine 606 is the 'KMSKS' region element. Lysine 605 provides a ligand contact to ATP.

Belongs to the class-I aminoacyl-tRNA synthetase family.

The protein localises to the cytoplasm. The catalysed reaction is tRNA(Leu) + L-leucine + ATP = L-leucyl-tRNA(Leu) + AMP + diphosphate. This chain is Leucine--tRNA ligase, found in Rickettsia felis (strain ATCC VR-1525 / URRWXCal2) (Rickettsia azadi).